Reading from the N-terminus, the 227-residue chain is ATP-dependent dethiobiotin synthetase BioD (227 aa).

Residue 13–18 (DVGKTV) coordinates ATP. Threonine 17 contributes to the Mg(2+) binding site. Lysine 38 is a catalytic residue. ATP contacts are provided by residues aspartate 55, 116–119 (EGAG), 176–177 (NR), and 205–207 (PYI). Mg(2+)-binding residues include aspartate 55 and glutamate 116.

This sequence belongs to the dethiobiotin synthetase family. In terms of assembly, homodimer. It depends on Mg(2+) as a cofactor.

The protein localises to the cytoplasm. The catalysed reaction is (7R,8S)-7,8-diammoniononanoate + CO2 + ATP = (4R,5S)-dethiobiotin + ADP + phosphate + 3 H(+). It participates in cofactor biosynthesis; biotin biosynthesis; biotin from 7,8-diaminononanoate: step 1/2. Functionally, catalyzes a mechanistically unusual reaction, the ATP-dependent insertion of CO2 between the N7 and N8 nitrogen atoms of 7,8-diaminopelargonic acid (DAPA, also called 7,8-diammoniononanoate) to form a ureido ring. The polypeptide is ATP-dependent dethiobiotin synthetase BioD (Vibrio campbellii (strain ATCC BAA-1116)).